Consider the following 877-residue polypeptide: Phosphoenolpyruvate carboxylase (877 aa).

Active-site residues include histidine 138 and lysine 544.

It belongs to the PEPCase type 1 family. It depends on Mg(2+) as a cofactor.

It carries out the reaction oxaloacetate + phosphate = phosphoenolpyruvate + hydrogencarbonate. In terms of biological role, forms oxaloacetate, a four-carbon dicarboxylic acid source for the tricarboxylic acid cycle. This chain is Phosphoenolpyruvate carboxylase, found in Vibrio parahaemolyticus serotype O3:K6 (strain RIMD 2210633).